Here is a 761-residue protein sequence, read N- to C-terminus: Wall-associated receptor kinase-like 4 (761 aa).

Residues 1 to 26 (MKKETQNLQCIPLVISVLSLFGVSSA) form the signal peptide. Residues 27-349 (RKPPYLCNRV…EPKKPGQIKP (323 aa)) are Extracellular-facing. Residues N64, N166, N206, N226, and N262 are each glycosylated (N-linked (GlcNAc...) asparagine). An atypical EGF-like region spans residues 278–339 (CVCSYGYFSG…CVNKPGWFTC (62 aa)). 3 disulfide bridges follow: C280/C293, C316/C330, and C325/C339. A helical transmembrane segment spans residues 350 to 370 (VFQGVLIGSALLLFAFGIFGL). The Cytoplasmic portion of the chain corresponds to 371–761 (YKFIKKQRRS…VEPLVPLRTW (391 aa)). In terms of domain architecture, Protein kinase spans 424–697 (FNTNRVLGQG…REVSVELERI (274 aa)). ATP-binding positions include 430 to 438 (LGQGGQGTV) and K452. Position 497 is a phosphotyrosine (Y497). The active-site Proton acceptor is the D549. Residues T583 and T588 each carry the phosphothreonine modification. Y596 is modified (phosphotyrosine). The interval 701–761 (SYKSEIHNDD…VEPLVPLRTW (61 aa)) is disordered. The segment covering 708–732 (NDDDDDDDDDDEDDQAMELNIEETW) has biased composition (acidic residues).

This sequence belongs to the protein kinase superfamily. Ser/Thr protein kinase family. Expressed in the whole plant. Detected in root-shoot junctions and lateral root initiation sites.

It localises to the membrane. The catalysed reaction is L-seryl-[protein] + ATP = O-phospho-L-seryl-[protein] + ADP + H(+). The enzyme catalyses L-threonyl-[protein] + ATP = O-phospho-L-threonyl-[protein] + ADP + H(+). Functionally, serine/threonine-protein kinase that may function as a signaling receptor of extracellular matrix component. Plays a role in plant mineral nutrients response. In Arabidopsis thaliana (Mouse-ear cress), this protein is Wall-associated receptor kinase-like 4 (WAKL4).